We begin with the raw amino-acid sequence, 428 residues long: uncharacterized protein (428 aa).

Disordered regions lie at residues 1–25 (MRDN…PTRT), 157–219 (DTAK…TEQV), and 247–271 (DFGT…PWRP). Positions 12 to 22 (GSESQQTTYDP) are enriched in polar residues. Over residues 157 to 171 (DTAKSNEKLQGDESK) the composition is skewed to basic and acidic residues. Low complexity predominate over residues 172–186 (SSNGSSSTSTTTQRG). Residues 206 to 217 (GSQGNSGEQGTE) show a composition bias toward polar residues.

It belongs to the adhesin P1 family.

This is an uncharacterized protein from Mycoplasma pneumoniae (strain ATCC 29342 / M129 / Subtype 1) (Mycoplasmoides pneumoniae).